Reading from the N-terminus, the 205-residue chain is MSKRESAKYKIDRRLGENIWGRPKSPVNRREYGPGQHGQRRKGKLSDFGVQLRAKQKLKGFYGDISEKQFRKTYEEAARRKGDTGENLIGLLESRLDAVVYRAKFVPTIFAARQFINHGHVNVNGRRVNIQSYRLKVGDVVEVREKSKQLAIVLEAVQLAERDVPDYIDVDHNKMVATYNRVPGLLDVPYAVQMEPNLVVEFYSR.

Residues 19 to 45 form a disordered region; sequence IWGRPKSPVNRREYGPGQHGQRRKGKL. Residues 94-157 form the S4 RNA-binding domain; it reads SRLDAVVYRA…KQLAIVLEAV (64 aa).

Belongs to the universal ribosomal protein uS4 family. Part of the 30S ribosomal subunit. Contacts protein S5. The interaction surface between S4 and S5 is involved in control of translational fidelity.

One of the primary rRNA binding proteins, it binds directly to 16S rRNA where it nucleates assembly of the body of the 30S subunit. Its function is as follows. With S5 and S12 plays an important role in translational accuracy. This chain is Small ribosomal subunit protein uS4, found in Brucella suis biovar 1 (strain 1330).